Here is a 312-residue protein sequence, read N- to C-terminus: Ribonuclease HIII (312 aa).

The RNase H type-2 domain occupies 95-312 (MSILGSDEVG…TEKAFRLLKK (218 aa)). Positions 101, 102, and 206 each coordinate a divalent metal cation.

This sequence belongs to the RNase HII family. RnhC subfamily. It depends on Mn(2+) as a cofactor. Mg(2+) serves as cofactor.

The protein resides in the cytoplasm. It catalyses the reaction Endonucleolytic cleavage to 5'-phosphomonoester.. Endonuclease that specifically degrades the RNA of RNA-DNA hybrids. This chain is Ribonuclease HIII, found in Bacillus mycoides (strain KBAB4) (Bacillus weihenstephanensis).